Reading from the N-terminus, the 382-residue chain is Pyrimidine monooxygenase RutA (382 aa).

FMN-binding positions include 68 to 69 (IK), asparagine 134, glutamate 143, 159 to 160 (RY), and serine 209.

The protein belongs to the NtaA/SnaA/DszA monooxygenase family. RutA subfamily.

The enzyme catalyses uracil + FMNH2 + NADH + O2 = (Z)-3-ureidoacrylate + FMN + NAD(+) + H2O + H(+). It catalyses the reaction thymine + FMNH2 + NADH + O2 = (Z)-2-methylureidoacrylate + FMN + NAD(+) + H2O + H(+). Catalyzes the pyrimidine ring opening between N-3 and C-4 by an unusual flavin hydroperoxide-catalyzed mechanism, adding oxygen atoms in the process to yield ureidoacrylate peracid, that immediately reacts with FMN forming ureidoacrylate and FMN-N(5)-oxide. The FMN-N(5)-oxide reacts spontaneously with NADH to produce FMN. Requires the flavin reductase RutF to regenerate FMN in vivo. The polypeptide is Pyrimidine monooxygenase RutA (Escherichia coli (strain SE11)).